A 96-amino-acid chain; its full sequence is UPF0235 protein YggU (96 aa).

Belongs to the UPF0235 family.

The protein is UPF0235 protein YggU of Escherichia coli O157:H7.